The sequence spans 206 residues: Protein GrpE (206 aa).

Basic and acidic residues predominate over residues 1–14 (MDKKNEQQEVREEN). The tract at residues 1–56 (MDKKNEQQEVREENDTSINQESETQVELEEEVVNEECETSSEKTDEKEVDDENVTD) is disordered. Acidic residues predominate over residues 24–39 (TQVELEEEVVNEECET).

It belongs to the GrpE family. Homodimer.

It is found in the cytoplasm. Functionally, participates actively in the response to hyperosmotic and heat shock by preventing the aggregation of stress-denatured proteins, in association with DnaK and GrpE. It is the nucleotide exchange factor for DnaK and may function as a thermosensor. Unfolded proteins bind initially to DnaJ; upon interaction with the DnaJ-bound protein, DnaK hydrolyzes its bound ATP, resulting in the formation of a stable complex. GrpE releases ADP from DnaK; ATP binding to DnaK triggers the release of the substrate protein, thus completing the reaction cycle. Several rounds of ATP-dependent interactions between DnaJ, DnaK and GrpE are required for fully efficient folding. In Clostridioides difficile (strain 630) (Peptoclostridium difficile), this protein is Protein GrpE.